We begin with the raw amino-acid sequence, 552 residues long: Glycosyltransferase family 92 protein RCOM_0530710 (552 aa).

A helical; Signal-anchor transmembrane segment spans residues W12–F34. In terms of domain architecture, GT92 spans K277–W520.

The protein belongs to the glycosyltransferase 92 family.

The protein resides in the membrane. This chain is Glycosyltransferase family 92 protein RCOM_0530710, found in Ricinus communis (Castor bean).